Here is a 517-residue protein sequence, read N- to C-terminus: Glutamate--cysteine ligase (517 aa).

It belongs to the glutamate--cysteine ligase type 1 family. Type 1 subfamily.

The catalysed reaction is L-cysteine + L-glutamate + ATP = gamma-L-glutamyl-L-cysteine + ADP + phosphate + H(+). The protein operates within sulfur metabolism; glutathione biosynthesis; glutathione from L-cysteine and L-glutamate: step 1/2. The chain is Glutamate--cysteine ligase from Pectobacterium atrosepticum (strain SCRI 1043 / ATCC BAA-672) (Erwinia carotovora subsp. atroseptica).